A 71-amino-acid polypeptide reads, in one-letter code: uncharacterized protein (71 aa).

This is an uncharacterized protein from Enterobacteria phage T4 (Bacteriophage T4).